A 230-amino-acid polypeptide reads, in one-letter code: Protein FAM3A (230 aa).

An N-terminal signal peptide occupies residues 1 to 33 (MRLAGPLRIVALVVSVGLTWIVVSILLGGPGSG). 2 disulfide bridges follow: cysteine 59–cysteine 87 and cysteine 65–cysteine 222. One can recognise a GG-type lectin domain in the interval 68–226 (EHLAFRVVSG…LEMEGCIPRR (159 aa)).

Belongs to the FAM3 family.

It is found in the secreted. The polypeptide is Protein FAM3A (FAM3A) (Pongo abelii (Sumatran orangutan)).